The primary structure comprises 219 residues: Probable transcription factor At1g55950 (219 aa).

The segment at 9–77 is disordered; the sequence is ASHSLKSLMA…DEKMETEEEG (69 aa). Positions 17-30 are enriched in basic residues; sequence MAKKNKRSQQKNKC. The segment covering 31 to 48 has biased composition (basic and acidic residues); that stretch reads LKPEKDPSTVKRLLEDPP. Acidic residues predominate over residues 65-77; that stretch reads YGDDEKMETEEEG.

This sequence belongs to the GeBP family.

In Arabidopsis thaliana (Mouse-ear cress), this protein is Probable transcription factor At1g55950.